Consider the following 250-residue polypeptide: uncharacterized protein (250 aa).

This is an uncharacterized protein from Sulfolobus islandicus filamentous virus (isolate Iceland/Hveragerdi) (SIFV).